The chain runs to 140 residues: Nucleoside diphosphate kinase (140 aa).

Residues Lys-9, Phe-57, Arg-85, Thr-91, Arg-102, and Asn-112 each coordinate ATP. His-115 serves as the catalytic Pros-phosphohistidine intermediate.

This sequence belongs to the NDK family. As to quaternary structure, homotetramer. Requires Mg(2+) as cofactor.

It is found in the cytoplasm. The catalysed reaction is a 2'-deoxyribonucleoside 5'-diphosphate + ATP = a 2'-deoxyribonucleoside 5'-triphosphate + ADP. It catalyses the reaction a ribonucleoside 5'-diphosphate + ATP = a ribonucleoside 5'-triphosphate + ADP. Functionally, major role in the synthesis of nucleoside triphosphates other than ATP. The ATP gamma phosphate is transferred to the NDP beta phosphate via a ping-pong mechanism, using a phosphorylated active-site intermediate. In Chlorobaculum parvum (strain DSM 263 / NCIMB 8327) (Chlorobium vibrioforme subsp. thiosulfatophilum), this protein is Nucleoside diphosphate kinase.